A 252-amino-acid polypeptide reads, in one-letter code: Flagellar L-ring protein (252 aa).

The first 25 residues, 1–25 (MSKSVPLQRIVLVAALMATGGLAGG), serve as a signal peptide directing secretion. C26 is lipidated: N-palmitoyl cysteine. The S-diacylglycerol cysteine moiety is linked to residue C26.

This sequence belongs to the FlgH family. In terms of assembly, the basal body constitutes a major portion of the flagellar organelle and consists of four rings (L,P,S, and M) mounted on a central rod.

It is found in the cell outer membrane. The protein resides in the bacterial flagellum basal body. Assembles around the rod to form the L-ring and probably protects the motor/basal body from shearing forces during rotation. This chain is Flagellar L-ring protein, found in Rhodopseudomonas palustris (strain ATCC BAA-98 / CGA009).